The sequence spans 104 residues: Acetylcholine receptor subunit alpha (104 aa).

The Extracellular segment spans residues 1–104 (NPPAIFKSYC…YFIVNVIIPC (104 aa)). Cystine bridges form between Cys10-Cys24 and Cys74-Cys75. An N-linked (GlcNAc...) asparagine glycan is attached at Asn23.

The protein belongs to the ligand-gated ion channel (TC 1.A.9) family. Acetylcholine receptor (TC 1.A.9.1) subfamily. Alpha-1/CHRNA1 sub-subfamily. In terms of assembly, one of the alpha chains that assemble within the acetylcholine receptor, a pentamer of two alpha chains, a beta, a delta, and a gamma or epsilon chains.

The protein resides in the postsynaptic cell membrane. Its subcellular location is the cell membrane. It catalyses the reaction K(+)(in) = K(+)(out). The enzyme catalyses Na(+)(in) = Na(+)(out). Functionally, upon acetylcholine binding, the AChR responds by an extensive change in conformation that affects all subunits and leads to opening of an ion-conducting channel across the plasma membrane. The protein is Acetylcholine receptor subunit alpha (CHRNA1) of Naja naja (Indian cobra).